Reading from the N-terminus, the 131-residue chain is Small ribosomal subunit protein uS8 (131 aa).

Belongs to the universal ribosomal protein uS8 family. In terms of assembly, part of the 30S ribosomal subunit. Contacts proteins S5 and S12.

Functionally, one of the primary rRNA binding proteins, it binds directly to 16S rRNA central domain where it helps coordinate assembly of the platform of the 30S subunit. In Bordetella petrii (strain ATCC BAA-461 / DSM 12804 / CCUG 43448), this protein is Small ribosomal subunit protein uS8.